The following is a 65-amino-acid chain: Large ribosomal subunit protein bL35 (65 aa).

Residues 1–22 (MPKIKTVRGAAKRFKKTGSGGF) are disordered. Over residues 10–22 (AAKRFKKTGSGGF) the composition is skewed to basic residues.

This sequence belongs to the bacterial ribosomal protein bL35 family.

In Serratia proteamaculans (strain 568), this protein is Large ribosomal subunit protein bL35.